Here is a 796-residue protein sequence, read N- to C-terminus: Cadherin-11 (796 aa).

The signal sequence occupies residues 1-24; that stretch reads MKENYCLQAALVCLSMLYHSQAFA. The propeptide occupies 25-53; that stretch reads LERRSHLHPSFHGHHEKGKEGQVLQRSKR. Cadherin domains are found at residues 54 to 159, 160 to 268, 269 to 383, 384 to 486, and 487 to 612; these read GWVW…PPEF, LHEI…PPKF, PQSV…PPMF, LAPS…DNAP, and KFAA…YILN. At 54–617 the chain is on the extracellular side; it reads GWVWNQFFVI…AYILNAGLST (564 aa). N-linked (GlcNAc...) asparagine glycans are attached at residues asparagine 455 and asparagine 540. A helical membrane pass occupies residues 618–640; it reads GALIAILACIVILLVIVVLFVTL. Residues 641 to 796 are Cytoplasmic-facing; sequence RRQKKEPLIV…GSKDTFDDDS (156 aa). Serine 788 bears the Phosphoserine mark. Phosphothreonine is present on threonine 791.

As to quaternary structure, interacts with PCDH8. As to expression, selectively expressed in osteoblastic cell lines, precursor cell lines of osteoblasts, and primary osteoblastic cells from calvaria, as well as in lung, testis, and brain tissues at low levels.

The protein resides in the cell membrane. Its function is as follows. Cadherins are calcium-dependent cell adhesion proteins. They preferentially interact with themselves in a homophilic manner in connecting cells; cadherins may thus contribute to the sorting of heterogeneous cell types. Required for proper focal adhesion assembly. Involved in the regulation of cell migration. This is Cadherin-11 (Cdh11) from Mus musculus (Mouse).